A 525-amino-acid chain; its full sequence is C6 finger transcription factor fsqA (525 aa).

A DNA-binding region (zn(2)-C6 fungal-type) is located at residues 12–53 (CDRCRGQKLRCVGAGKPIPNSSSRLLRNEIPCDRCRRAKVEC). 3 disordered regions span residues 80 to 142 (RSSS…LGDM), 204 to 260 (EWNS…EPAG), and 327 to 371 (RARS…ARSS). Residues 95 to 115 (PPNSLVTAASKPHPNSLSFNH) show a composition bias toward polar residues. The span at 327–337 (RARSQWSSLPE) shows a compositional bias: polar residues.

Its subcellular location is the nucleus. In terms of biological role, transcription factor that regulates the expression of the gene cluster that mediates the biosynthesis of the isoquinoline alkaloids fumisoquin A, fumisoquin B and fumisoquin C; as well as small amounts of fumipyrrole as a shunt metabolite. The products of the cluster lead to a brown coloration and are important for growth and conidiation. In Aspergillus fumigatus (strain ATCC MYA-4609 / CBS 101355 / FGSC A1100 / Af293) (Neosartorya fumigata), this protein is C6 finger transcription factor fsqA.